A 161-amino-acid chain; its full sequence is Abscisic acid receptor PYL11 (161 aa).

The interval 3–154 (TSQKYHTCGS…NLKSLAKLSE (152 aa)) is START-like. Abscisate is bound by residues Lys39, 68 to 73 (AEFSRE), 95 to 101 (RLVNYRS), and Glu119. Positions 64–68 (SGLPA) match the Gate loop motif. Residues 94-96 (HRL) carry the Latch loop motif.

It belongs to the PYR/PYL/RCAR abscisic acid intracellular receptor family. As to quaternary structure, homodimer. Binds ABA on one subunit only. Interacts with PP2Cs. Binds to CARs protein in an ABA-independent manner, both at the plasma membrane and in the nucleus. Interacts with I-2 and TOPP1.

The protein localises to the cytoplasm. Its subcellular location is the nucleus. The protein resides in the cell membrane. Functionally, receptor for abscisic acid (ABA) required for ABA-mediated responses such as stomatal closure and germination inhibition. Inhibits the activity of group-A protein phosphatases type 2C (PP2Cs) when activated by ABA. Suppresses the phosphatase activity of TOPP1 in a dose-dependent manner in vitro. In Arabidopsis thaliana (Mouse-ear cress), this protein is Abscisic acid receptor PYL11 (PYL11).